The chain runs to 590 residues: Cytosolic Fe-S cluster assembly factor nar1 (590 aa).

Residue C20 coordinates [4Fe-4S] cluster. The interval 25-50 (ESLPQKQSNENPYEVTTEDKVQPENP) is disordered. [4Fe-4S] cluster contacts are provided by C60, C63, C66, C204, and C259. The segment at 423–446 (PGAKVATGQTAGGRRQPISRNGAS) is disordered. C461 and C465 together coordinate [4Fe-4S] cluster.

It belongs to the NARF family.

Its function is as follows. Component of the cytosolic Fe/S protein assembly machinery. Required for maturation of extramitochondrial Fe/S proteins. May play a role in the transfer of pre-assembled Fe/S clusters to target apoproteins. This Emericella nidulans (strain FGSC A4 / ATCC 38163 / CBS 112.46 / NRRL 194 / M139) (Aspergillus nidulans) protein is Cytosolic Fe-S cluster assembly factor nar1 (nar1).